The sequence spans 481 residues: Aspartyl/glutamyl-tRNA(Asn/Gln) amidotransferase subunit B (481 aa).

The protein belongs to the GatB/GatE family. GatB subfamily. As to quaternary structure, heterotrimer of A, B and C subunits.

It carries out the reaction L-glutamyl-tRNA(Gln) + L-glutamine + ATP + H2O = L-glutaminyl-tRNA(Gln) + L-glutamate + ADP + phosphate + H(+). It catalyses the reaction L-aspartyl-tRNA(Asn) + L-glutamine + ATP + H2O = L-asparaginyl-tRNA(Asn) + L-glutamate + ADP + phosphate + 2 H(+). Allows the formation of correctly charged Asn-tRNA(Asn) or Gln-tRNA(Gln) through the transamidation of misacylated Asp-tRNA(Asn) or Glu-tRNA(Gln) in organisms which lack either or both of asparaginyl-tRNA or glutaminyl-tRNA synthetases. The reaction takes place in the presence of glutamine and ATP through an activated phospho-Asp-tRNA(Asn) or phospho-Glu-tRNA(Gln). This Pseudomonas syringae pv. syringae (strain B728a) protein is Aspartyl/glutamyl-tRNA(Asn/Gln) amidotransferase subunit B.